The primary structure comprises 423 residues: Enolase (423 aa).

Glutamine 165 contacts (2R)-2-phosphoglycerate. The Proton donor role is filled by glutamate 209. 3 residues coordinate Mg(2+): aspartate 244, glutamate 285, and aspartate 310. 4 residues coordinate (2R)-2-phosphoglycerate: lysine 335, arginine 364, serine 365, and lysine 386. Catalysis depends on lysine 335, which acts as the Proton acceptor.

The protein belongs to the enolase family. Homooctamer formed by a tetramer of dimers. Requires Mg(2+) as cofactor.

Its subcellular location is the cytoplasm. The protein localises to the secreted. It localises to the cell surface. The enzyme catalyses (2R)-2-phosphoglycerate = phosphoenolpyruvate + H2O. Its pathway is carbohydrate degradation; glycolysis; pyruvate from D-glyceraldehyde 3-phosphate: step 4/5. The covalent binding to the substrate causes inactivation of the enzyme, and possibly serves as a signal for the export of the protein. Catalyzes the reversible conversion of 2-phosphoglycerate (2-PG) into phosphoenolpyruvate (PEP). It is essential for the degradation of carbohydrates via glycolysis. In Methanocaldococcus jannaschii (strain ATCC 43067 / DSM 2661 / JAL-1 / JCM 10045 / NBRC 100440) (Methanococcus jannaschii), this protein is Enolase.